The sequence spans 346 residues: UDP-N-acetylenolpyruvoylglucosamine reductase (346 aa).

The FAD-binding PCMH-type domain occupies 18-189; that stretch reads LRAQARAFIA…VSVVFALKTH (172 aa). Residue Arg-165 is part of the active site. Ser-240 functions as the Proton donor in the catalytic mechanism. Residue Glu-336 is part of the active site.

The protein belongs to the MurB family. The cofactor is FAD.

The protein localises to the cytoplasm. The catalysed reaction is UDP-N-acetyl-alpha-D-muramate + NADP(+) = UDP-N-acetyl-3-O-(1-carboxyvinyl)-alpha-D-glucosamine + NADPH + H(+). Its pathway is cell wall biogenesis; peptidoglycan biosynthesis. Cell wall formation. The sequence is that of UDP-N-acetylenolpyruvoylglucosamine reductase from Neisseria meningitidis serogroup C (strain 053442).